Reading from the N-terminus, the 891-residue chain is Putative alpha,alpha-trehalose-phosphate synthase [UDP-forming] 100 kDa subunit (891 aa).

T88 is modified (phosphothreonine). The disordered stretch occupies residues 88–126; the sequence is TGGSMTPGLGAMSPIPGSGRSSPLYTQPRSRATSPSRVR. Residues 106–124 are compositionally biased toward polar residues; sequence GRSSPLYTQPRSRATSPSR. 2 positions are modified to phosphoserine: S108 and S109. Residues 132-613 form a glycosyltransferase region; the sequence is AAPGIGAGAL…VTGFETKLKK (482 aa).

It in the N-terminal section; belongs to the glycosyltransferase 20 family.

It carries out the reaction D-glucose 6-phosphate + UDP-alpha-D-glucose = alpha,alpha-trehalose 6-phosphate + UDP + H(+). This Schizosaccharomyces pombe (strain 972 / ATCC 24843) (Fission yeast) protein is Putative alpha,alpha-trehalose-phosphate synthase [UDP-forming] 100 kDa subunit.